A 451-amino-acid chain; its full sequence is Bifunctional protein GlmU (451 aa).

The segment at 1–217 is pyrophosphorylase; that stretch reads MKTLILAAGL…IDEVTGVNDR (217 aa). UDP-N-acetyl-alpha-D-glucosamine is bound by residues 6 to 9, Lys-20, Gln-68, 73 to 74, 95 to 97, Gly-134, Glu-146, Asn-161, and Asn-215; these read LAAG, GT, and YGD. Asp-97 contributes to the Mg(2+) binding site. Asn-215 lines the Mg(2+) pocket. The interval 218 to 238 is linker; the sequence is IQLSKLEKNMRKRINEKLMRE. Positions 239-451 are N-acetyltransferase; sequence GVRIIDPESV…GGNQNADSKE (213 aa). UDP-N-acetyl-alpha-D-glucosamine is bound by residues Arg-320 and Lys-338. His-350 serves as the catalytic Proton acceptor. Tyr-353 and Asn-364 together coordinate UDP-N-acetyl-alpha-D-glucosamine. Acetyl-CoA is bound by residues Ala-367, 373-374, Ser-392, Ala-410, and Arg-427; that span reads NY.

In the N-terminal section; belongs to the N-acetylglucosamine-1-phosphate uridyltransferase family. This sequence in the C-terminal section; belongs to the transferase hexapeptide repeat family. In terms of assembly, homotrimer. The cofactor is Mg(2+).

It localises to the cytoplasm. The enzyme catalyses alpha-D-glucosamine 1-phosphate + acetyl-CoA = N-acetyl-alpha-D-glucosamine 1-phosphate + CoA + H(+). It carries out the reaction N-acetyl-alpha-D-glucosamine 1-phosphate + UTP + H(+) = UDP-N-acetyl-alpha-D-glucosamine + diphosphate. The protein operates within nucleotide-sugar biosynthesis; UDP-N-acetyl-alpha-D-glucosamine biosynthesis; N-acetyl-alpha-D-glucosamine 1-phosphate from alpha-D-glucosamine 6-phosphate (route II): step 2/2. It functions in the pathway nucleotide-sugar biosynthesis; UDP-N-acetyl-alpha-D-glucosamine biosynthesis; UDP-N-acetyl-alpha-D-glucosamine from N-acetyl-alpha-D-glucosamine 1-phosphate: step 1/1. Its pathway is bacterial outer membrane biogenesis; LPS lipid A biosynthesis. Functionally, catalyzes the last two sequential reactions in the de novo biosynthetic pathway for UDP-N-acetylglucosamine (UDP-GlcNAc). The C-terminal domain catalyzes the transfer of acetyl group from acetyl coenzyme A to glucosamine-1-phosphate (GlcN-1-P) to produce N-acetylglucosamine-1-phosphate (GlcNAc-1-P), which is converted into UDP-GlcNAc by the transfer of uridine 5-monophosphate (from uridine 5-triphosphate), a reaction catalyzed by the N-terminal domain. This Thermosipho africanus (strain TCF52B) protein is Bifunctional protein GlmU.